Here is a 1425-residue protein sequence, read N- to C-terminus: Neuropathy target esterase sws (1425 aa).

The Lumenal portion of the chain corresponds to 1–34 (MDVLEMLRASASGSYNTIFSDAWCQYVSKQITAT). Residues 35 to 55 (VYMYFALVMMSLLFIAWFLYF) form a helical membrane-spanning segment. Residues 56 to 1425 (KRMARLRLRD…RSSPNNETKN (1370 aa)) are Cytoplasmic-facing. An a nucleoside 3',5'-cyclic phosphate-binding site is contributed by 174–301 (IFGHFEKPVF…IRVIQVIMIR (128 aa)). 2 stretches are compositionally biased toward polar residues: residues 332 to 348 (TMSG…SRQA) and 357 to 366 (SQMNLMQSAV). Residues 332 to 410 (TMSGPINSQT…NPDGSFHGTT (79 aa)) form a disordered region. Positions 367-381 (SGTGSSGVSVTVTRP) are enriched in low complexity. Phosphoserine occurs at positions 444 and 453. A nucleoside 3',5'-cyclic phosphate is bound by residues 482-609 (ELGL…VVRR) and 598-727 (IVLD…HRFL). Positions 952–1118 (LVLGGGGARG…VNNLPADVMH (167 aa)) constitute a PNPLA domain. Residues 956–961 (GGGARG) carry the GXGXXG motif. The GXSXG signature appears at 983–987 (GVSIG). The active-site Nucleophile is the serine 985. The active-site Proton acceptor is the aspartate 1105. The DGA/G motif lies at 1105-1107 (DGG). Serine 1160 carries the post-translational modification Phosphoserine. A disordered region spans residues 1330–1425 (LERKTDKSTQ…RSSPNNETKN (96 aa)). Positions 1337-1347 (STQSSPPSNSR) are enriched in low complexity. A compositionally biased stretch (basic and acidic residues) spans 1348–1358 (SDMRGKEEARH). Residues 1380–1403 (TKTQTGQEQELQQEQQDQGATAEQ) show a composition bias toward low complexity. Residues 1404-1416 (LVDKDKEENKENR) show a composition bias toward basic and acidic residues.

Belongs to the NTE family. In terms of assembly, interacts with Pka-C3; interaction inhibits the catalytic function of Pka-C3 and the esterase activity of sws. In terms of tissue distribution, isoform A and isoform B are expressed in the entire brain cortex; cortical cell bodies of adult brain. Sws and Pka-C3 are colocalized in all neurons.

It localises to the endoplasmic reticulum membrane. The enzyme catalyses a 1-acyl-sn-glycero-3-phosphocholine + H2O = sn-glycerol 3-phosphocholine + a fatty acid + H(+). Phospholipase B that deacylates intracellular phosphatidylcholine (PtdCho), generating glycerophosphocholine (GroPtdCho). This deacylation occurs at both sn-2 and sn-1 positions of PtdCho. Its specific chemical modification by certain organophosphorus (OP) compounds leads to distal axonopathy. Plays a role in the signaling mechanism between neurons and glia that regulates glia wrapping during development of the adult brain. Essential for membrane lipid homeostasis and cell survival in both neurons and glia of the adult brain. This Drosophila melanogaster (Fruit fly) protein is Neuropathy target esterase sws (sws).